Here is a 73-residue protein sequence, read N- to C-terminus: Large ribosomal subunit protein uL30 (73 aa).

Belongs to the universal ribosomal protein uL30 family. Part of the 50S ribosomal subunit.

In Borreliella afzelii (strain PKo) (Borrelia afzelii), this protein is Large ribosomal subunit protein uL30.